The chain runs to 434 residues: ATP phosphoribosyltransferase regulatory subunit (434 aa).

It belongs to the class-II aminoacyl-tRNA synthetase family. HisZ subfamily. In terms of assembly, heteromultimer composed of HisG and HisZ subunits.

It localises to the cytoplasm. Its pathway is amino-acid biosynthesis; L-histidine biosynthesis; L-histidine from 5-phospho-alpha-D-ribose 1-diphosphate: step 1/9. Its function is as follows. Required for the first step of histidine biosynthesis. May allow the feedback regulation of ATP phosphoribosyltransferase activity by histidine. In Geobacter metallireducens (strain ATCC 53774 / DSM 7210 / GS-15), this protein is ATP phosphoribosyltransferase regulatory subunit.